A 146-amino-acid polypeptide reads, in one-letter code: Large ribosomal subunit protein bL17 (146 aa).

Residues 118-146 (RDPAAKGQDSGPKPEVASDEDEAGEAAAA) are disordered. Acidic residues predominate over residues 134 to 146 (ASDEDEAGEAAAA).

This sequence belongs to the bacterial ribosomal protein bL17 family. Part of the 50S ribosomal subunit. Contacts protein L32.

This Acidiphilium cryptum (strain JF-5) protein is Large ribosomal subunit protein bL17.